The following is a 498-amino-acid chain: WD repeat-containing protein 55 homolog (498 aa).

The segment at 1–133 (MHTHNNFKTP…TFDLDEDDET (133 aa)) is disordered. 3 stretches are compositionally biased toward acidic residues: residues 12–23 (DEDELDDLDEDM), 31–48 (IEQEVLNESDSDNDEYDL), and 83–95 (SDSDDSMLDDAGD). The span at 114–123 (PSGSNRQSEA) shows a compositional bias: polar residues. 6 WD repeats span residues 155–194 (KLEDFITDICFHPDRDIIALATIIGDVHLYEYDNEANKLL), 199–238 (VHSKACRDVEFTEDGRFLLTCSKDKCVMVTDMETEKLKKL), 242–280 (AHDDAINTLHVLNENLFATGDDAGTVKLWDLRTKNAIFE), 283–322 (ELEDQITQLTTNDQSKLLLATSADGYLTTFNIAARKMYVQ), 325–364 (PYEEELSCMGIYRGDSKLVVGTSKGRLYTYNWGQFGYHCD), and 409–448 (QHNMPIESLDVNSNGELIASSSHNNDVRFWNVKYFEDFGD).

The protein belongs to the WD repeat WDR55 family.

The polypeptide is WD repeat-containing protein 55 homolog (Drosophila erecta (Fruit fly)).